The primary structure comprises 372 residues: Phospho-N-acetylmuramoyl-pentapeptide-transferase (372 aa).

10 helical membrane passes run 25–45 (RSLLSVLTSLTIGLVLGPIMI), 73–93 (TMGGILILLSIGISTLLWADL), 98–118 (VWIVLGVMVVFGAVGWADDWI), 134–154 (FFWTSVASLGAGIALYLIATQ), 176–196 (SIPLSIVPLGLAFIVFTYLVI), 211–231 (GLAIMPVVMVATGLGVFAYLS), 251–271 (LVVICSAMIGAGLAFLWYNAH), 275–295 (VFMGDVGALALGAMLGTIAVM), 300–320 (IVFAIMGGVFVMEAVSVFLQI), and 349–369 (QVVIRFWIITIMLVVLGLMTL).

This sequence belongs to the glycosyltransferase 4 family. MraY subfamily. Requires Mg(2+) as cofactor.

It is found in the cell inner membrane. The enzyme catalyses UDP-N-acetyl-alpha-D-muramoyl-L-alanyl-gamma-D-glutamyl-meso-2,6-diaminopimeloyl-D-alanyl-D-alanine + di-trans,octa-cis-undecaprenyl phosphate = di-trans,octa-cis-undecaprenyl diphospho-N-acetyl-alpha-D-muramoyl-L-alanyl-D-glutamyl-meso-2,6-diaminopimeloyl-D-alanyl-D-alanine + UMP. Its pathway is cell wall biogenesis; peptidoglycan biosynthesis. Functionally, catalyzes the initial step of the lipid cycle reactions in the biosynthesis of the cell wall peptidoglycan: transfers peptidoglycan precursor phospho-MurNAc-pentapeptide from UDP-MurNAc-pentapeptide onto the lipid carrier undecaprenyl phosphate, yielding undecaprenyl-pyrophosphoryl-MurNAc-pentapeptide, known as lipid I. The sequence is that of Phospho-N-acetylmuramoyl-pentapeptide-transferase from Acinetobacter baumannii (strain AB0057).